The primary structure comprises 748 residues: Spidroin-1 (748 aa).

25 repeat units span residues glutamine 1–glycine 25, alanine 26–glycine 38, alanine 39–glycine 66, alanine 67–glycine 96, alanine 97–glycine 130, alanine 131–glycine 158, alanine 159–glycine 191, alanine 192–glycine 204, alanine 205–glycine 235, alanine 236–glycine 262, alanine 263–glycine 292, alanine 293–glycine 305, alanine 306–glycine 333, alanine 334–glycine 360, alanine 361–glycine 394, alanine 395–glycine 424, alanine 425–glycine 458, alanine 459–glycine 485, alanine 486–glycine 512, alanine 513–glycine 525, serine 526–glycine 555, alanine 556–glycine 582, alanine 583–glycine 612, valine 613–glycine 642, and alanine 643–serine 655. The tract at residues glutamine 1–serine 655 is 25 X approximate tandem repeats.

The protein belongs to the silk fibroin family. In terms of assembly, major subunit, with spidroin 2, of the dragline silk.

It localises to the secreted. Its subcellular location is the extracellular space. In terms of biological role, spiders' major ampullate silk possesses unique characteristics of strength and elasticity. Fibroin consists of pseudocrystalline regions of antiparallel beta-sheet interspersed with elastic amorphous segments. In Trichonephila clavipes (Golden silk orbweaver), this protein is Spidroin-1.